Consider the following 425-residue polypeptide: Keratin, type II cytoskeletal I (425 aa).

The tract at residues 1-16 is coil 1A; sequence FLEQQNKVLETKWKLL. Residues 1–296 form the IF rod domain; the sequence is FLEQQNKVLE…YMLEGEEGRI (296 aa). Residues 17 to 37 are linker 1; the sequence is QEQGTKGTTKRANLDPLFEKY. The coil 1B stretch occupies residues 38-129; that stretch reads IADLKKYLDN…TRDAAELSQV (92 aa). The linker 12 stretch occupies residues 130–153; sequence HDQVTDTSVVLTMDNNRDLNLDSI. A coil 2 region spans residues 154–292; that stretch reads IKEVKCQYEQ…STYRYMLEGE (139 aa). Residues 293 to 425 are tail; that stretch reads EGRISGQIVN…STTSTTKKTY (133 aa).

Belongs to the intermediate filament family. As to quaternary structure, heterotetramer of two type I and two type II keratins.

This is Keratin, type II cytoskeletal I from Xenopus laevis (African clawed frog).